Here is a 265-residue protein sequence, read N- to C-terminus: Mlc titration factor A (265 aa).

Zn(2+)-binding residues include His111, His148, His152, and Glu211.

This sequence belongs to the MtfA family. Interacts with Mlc. It depends on Zn(2+) as a cofactor.

It localises to the cytoplasm. Functionally, involved in the modulation of the activity of the glucose-phosphotransferase system (glucose-PTS). Interacts with the transcriptional repressor Mlc, preventing its interaction with DNA and leading to the modulation of expression of genes regulated by Mlc, including ptsG, which encodes the PTS system glucose-specific EIICB component. Shows zinc-dependent metallopeptidase activity. The sequence is that of Mlc titration factor A from Klebsiella pneumoniae (strain 342).